The chain runs to 86 residues: Large ribosomal subunit protein bL31B (86 aa).

Belongs to the bacterial ribosomal protein bL31 family. Type B subfamily. Part of the 50S ribosomal subunit.

In Streptococcus agalactiae serotype III (strain NEM316), this protein is Large ribosomal subunit protein bL31B.